Consider the following 356-residue polypeptide: Heat-inducible transcription repressor HrcA (356 aa).

Belongs to the HrcA family.

Functionally, negative regulator of class I heat shock genes (grpE-dnaK-dnaJ and groELS operons). Prevents heat-shock induction of these operons. The chain is Heat-inducible transcription repressor HrcA from Bartonella quintana (strain Toulouse) (Rochalimaea quintana).